The chain runs to 963 residues: MHC class II regulatory factor RFX1 (963 aa).

4 disordered regions span residues 1-88 (MATQ…APSP), 105-126 (ASET…VPTQ), 174-218 (QSPA…GTPA), and 361-392 (SSSE…GSSG). Pro residues predominate over residues 20–41 (PQAPPQALPQPPPPAAPQPPAA). Over residues 42–67 (ATPQPQYVTELQSPQPQTQPPGSQKQ) the composition is skewed to low complexity. Position 54 is a phosphoserine (Ser-54). Residues 75-87 (APAPSQPATPAPS) are compositionally biased toward pro residues. Composition is skewed to polar residues over residues 107 to 119 (ETVS…STAS), 181 to 196 (KSGQ…QQVH), and 204 to 214 (VQANNSTSKTA). A compositionally biased stretch (low complexity) spans 361-372 (SSSEAGASNSSV). Over residues 373–392 (GAGGNGGGGSSGGGSGGSSG) the composition is skewed to gly residues. Positions 423-498 (TVQWLLDNYE…YHYYGLRIKA (76 aa)) form a DNA-binding region, RFX-type winged-helix. Positions 899–948 (SLNPLDPDKDEEEEEEEESEDELPQDISLAAGSESPALGPEALEPPAKLA) are disordered. The span at 906–922 (DKDEEEEEEEESEDELP) shows a compositional bias: acidic residues. Positions 932 to 947 (ESPALGPEALEPPAKL) are enriched in low complexity. 2 positions are modified to phosphoserine: Ser-962 and Ser-963.

It belongs to the RFX family. Homodimer; binds DNA as a homodimer. Heterodimer; heterodimerizes with RFX2 and RFX3.

Its subcellular location is the nucleus. Its function is as follows. Regulatory factor essential for MHC class II genes expression. Binds to the X boxes of MHC class II genes. This chain is MHC class II regulatory factor RFX1 (Rfx1), found in Mus musculus (Mouse).